Consider the following 125-residue polypeptide: RxLR effector protein Avh6 (125 aa).

The N-terminal stretch at 1 to 25 (MRLSSTTFVVLAAVLLASGTAVSKA) is a signal peptide. The short motif at 48–70 (RFLRSHHTEDGKAKLSNYDNEER) is the RxLR-dEER element.

The protein belongs to the RxLR effector family.

The protein localises to the secreted. It is found in the host cell. In terms of biological role, effector that suppresses plant defense responses during the early stages of pathogen infection. Suppresses cell death induced by effectors and PAMPs in plant hosts. Triggers a hypersensitive response (HR) in the presence of Rps1d. Suppresses BAX-induced cell death and enhanced P.capsici infection in Nicotiana benthamiana. Also suppresses effector-triggered immunity induction by associating with Avr1b and Rps1b, suggesting a role in suppressing plant immunity. This chain is RxLR effector protein Avh6, found in Phytophthora sojae (Soybean stem and root rot agent).